A 1031-amino-acid chain; its full sequence is Receptor-like protein EIX1 (1031 aa).

The signal sequence occupies residues 1–29 (MDKWKYARLAQFLFTLSLLFLETSFGLGG). The N-linked (GlcNAc...) asparagine glycan is linked to N30. Residues 30 to 113 (NKTLCLDKER…PRLTGKLSPS (84 aa)) are N-cap. The Extracellular portion of the chain corresponds to 30–971 (NKTLCLDKER…DEEEEFPSLE (942 aa)). The LRR 1 repeat unit spans residues 117–140 (LEYLNYLDLSVNEFERSEIPRFIG). The stretch at 142 to 165 (LKRLEYLNLSASFFSGVIPIQFQN) is one LRR 2; degenerate repeat. N-linked (GlcNAc...) asparagine glycans are attached at residues N149 and N165. LRR repeat units lie at residues 166-189 (LTSLRTLDLGENNLIVKDLRWLSH), 191-215 (SSLEFLSLSSSNFQVNNWFQEITKV), 216-240 (PSLKELDLSGCGLSKLVPSQADLAN), and 243-266 (LISLSVLHLCCNEFSSSSEYSWVF). The N-linked (GlcNAc...) asparagine glycan is linked to N240. A glycan (N-linked (GlcNAc...) asparagine) is linked at N267. 14 LRR repeats span residues 269–292 (TTSLTSIDLLYNQLSGQIDDRFGT), 293–317 (LMYLEHLDLANNLKIEGGVPSSFGN), 318–341 (LTRLRHLDMSNTQTVQWLPELFLR), 346–369 (RKSLEVLGLNENSLFGSIVNATRF), 370–393 (SSLKKLYLQKNMLNGSFMESAGQV), 394–416 (STLEYLDLSENQMRGALPDLALF), 417–440 (PSLRELHLGSNQFRGRIPQGIGKL), 441–463 (SQLRILDVSSNRLEGLPESMGQL), 465–487 (NLESFDASYNVLKGTITESHLSN), 488–509 (LSSLVDLDLSFNSLALKTSFNW), 512–536 (PFQLQVISLPSCNLGPSFPKWLQNQ), 538–559 (NYTVLDISLASISDTLPSWFSS), 561–584 (PPDLKILNLSNNQISGRVSDLIEN), and 586–611 (YGYRVIDLSYNNFSGALPLVPTNVQI). N-linked (GlcNAc...) asparagine glycosylation occurs at N317. Residues N365 and N383 are each glycosylated (N-linked (GlcNAc...) asparagine). N487 carries N-linked (GlcNAc...) asparagine glycosylation. 3 N-linked (GlcNAc...) asparagine glycosylation sites follow: N538, N568, and N597. One copy of the LRR 21; degenerate repeat lies at 612–629 (FYLHKNQFFGSISSICRS). LRR repeat units lie at residues 630–654 (RTSPTSLDLSHNQFSGELPDCWMNM), 655–678 (TSLAVLNLAYNNFSGEIPHSLGSL), 679–703 (TNLKALYIRQNSLSGMLPSFSQCQG), 705–725 (QILDLGGNKLTGSIPGWIGTD), 726–750 (LLNLRILSLRFNRLHGSIPSIICQL), and 752–773 (FLQILDLSANGLSGKIPHCFNN). Residues N653 and N666 are each glycosylated (N-linked (GlcNAc...) asparagine). 2 N-linked (GlcNAc...) asparagine glycosylation sites follow: N773 and N781. LRR repeat units lie at residues 823–847 (LLYLKTIDLSSNELIGGVPKEIADM), 848–871 (RGLKSLNLSRNELNGTVIEGIGQM), 872–895 (RMLESLDMSRNQLSGVIPQDLANL), and 896–918 (TFLSVLDLSNNQLSGRIPSSTQL). Residues N854, N861, and N894 are each glycosylated (N-linked (GlcNAc...) asparagine). Positions 919 to 971 (QSFDRSSYSDNAQLCGPPLQECPGYAPPSPLIDHGSNNNPQEHDEEEEFPSLE) are C-cap/acidic domain. The helical transmembrane segment at 972–992 (FYISMVLSFFVAFWGILGCLI) threads the bilayer. Residues 993 to 1031 (VNSSWRNAYFKFLTDTTSWLDMISRVWFARLKKKLRRAR) are Cytoplasmic-facing.

Belongs to the RLP family. As to quaternary structure, interacts with EIX elicitor protein.

The protein resides in the cell membrane. Functionally, involved in plant defense. Confers resistance to the fungal pathogen T.viride through recognition of the EIX elicitor protein. This chain is Receptor-like protein EIX1, found in Solanum lycopersicum (Tomato).